The following is a 407-amino-acid chain: Putative colanic acid biosynthesis glycosyl transferase WcaI (407 aa).

It functions in the pathway slime biogenesis; slime polysaccharide biosynthesis. The sequence is that of Putative colanic acid biosynthesis glycosyl transferase WcaI (wcaI) from Escherichia coli (strain K12).